A 32-amino-acid chain; its full sequence is Toxic phospholipase A2 (32 aa).

The protein belongs to the phospholipase A2 family. Group III subfamily. Requires Ca(2+) as cofactor.

The protein localises to the secreted. The protein resides in the nematocyst. It carries out the reaction a 1,2-diacyl-sn-glycero-3-phosphocholine + H2O = a 1-acyl-sn-glycero-3-phosphocholine + a fatty acid + H(+). PLA2 catalyzes the calcium-dependent hydrolysis of the 2-acyl groups in 3-sn-phosphoglycerides. This is Toxic phospholipase A2 from Rhopilema nomadica (Mediteranean medusa).